The following is a 364-amino-acid chain: Peptidoglycan transport system permease protein YejB (364 aa).

A run of 6 helical transmembrane segments spans residues 9-29, 134-154, 171-191, 219-239, 283-303, and 325-345; these read LALMIPTIVGIMGISFLVIQF, SASLGFWILIISYVISIPLGI, IIIIGYAVPSFLFGILLIVLF, IIDYFWHLTLPLIALSLSAFA, IVIAGFPGAFISAFFTGSLLI, and YPIVFGTLFIFSLMGLVVGLL. One can recognise an ABC transmembrane type-1 domain in the interval 131 to 350; it reads LPVSASLGFW…VVGLLSDLIY (220 aa).

Belongs to the binding-protein-dependent transport system permease family. As to quaternary structure, the complex is composed of one ATP-binding protein (YejF), two transmembrane proteins (YejB and YejE) and a solute-binding protein (YepA or YejA).

Its subcellular location is the cell inner membrane. Part of the ABC transporter complex YejBEF-YepA involved in the uptake of muropeptides, the breakdown products of cell wall peptidoglycan. The import of muropeptides into the cell enables peptidoglycan recycling, which is vital for cell wall integrity in this bacterium. Is also probably part of the ABC transporter complex YejABEF, which is likely involved in broad-spectrum peptide import. Responsible for the translocation of the substrate across the membrane. The polypeptide is Peptidoglycan transport system permease protein YejB (Agrobacterium fabrum (strain C58 / ATCC 33970) (Agrobacterium tumefaciens (strain C58))).